Reading from the N-terminus, the 463-residue chain is Asparagine--tRNA ligase (463 aa).

The protein belongs to the class-II aminoacyl-tRNA synthetase family. As to quaternary structure, homodimer.

The protein resides in the cytoplasm. The catalysed reaction is tRNA(Asn) + L-asparagine + ATP = L-asparaginyl-tRNA(Asn) + AMP + diphosphate + H(+). This chain is Asparagine--tRNA ligase, found in Alkaliphilus metalliredigens (strain QYMF).